The following is a 283-amino-acid chain: Diaminopimelate epimerase (283 aa).

Substrate-binding residues include Asn13, Gln45, and Asn65. Cys74 acts as the Proton donor in catalysis. Substrate-binding positions include 75–76 (GN), Asn156, Asn190, and 208–209 (ER). The active-site Proton acceptor is the Cys217. Position 218–219 (218–219 (GS)) interacts with substrate.

The protein belongs to the diaminopimelate epimerase family. Homodimer.

The protein localises to the cytoplasm. It carries out the reaction (2S,6S)-2,6-diaminopimelate = meso-2,6-diaminopimelate. It functions in the pathway amino-acid biosynthesis; L-lysine biosynthesis via DAP pathway; DL-2,6-diaminopimelate from LL-2,6-diaminopimelate: step 1/1. In terms of biological role, catalyzes the stereoinversion of LL-2,6-diaminopimelate (L,L-DAP) to meso-diaminopimelate (meso-DAP), a precursor of L-lysine and an essential component of the bacterial peptidoglycan. This is Diaminopimelate epimerase from Bartonella henselae (strain ATCC 49882 / DSM 28221 / CCUG 30454 / Houston 1) (Rochalimaea henselae).